Consider the following 495-residue polypeptide: UDP-N-acetylmuramoyl-L-alanyl-D-glutamate--2,6-diaminopimelate ligase (495 aa).

Residues leucine 27, serine 29, and 44–46 (HQA) contribute to the UDP-N-acetyl-alpha-D-muramoyl-L-alanyl-D-glutamate site. ATP is bound at residue 116–122 (GTNGKTT). Residues asparagine 157, 158–159 (TT), serine 185, glutamine 191, and arginine 193 contribute to the UDP-N-acetyl-alpha-D-muramoyl-L-alanyl-D-glutamate site. Residue lysine 225 is modified to N6-carboxylysine. Residues arginine 390, 414 to 417 (DNPR), glycine 465, and glutamate 469 each bind meso-2,6-diaminopimelate. Positions 414 to 417 (DNPR) match the Meso-diaminopimelate recognition motif motif.

Belongs to the MurCDEF family. MurE subfamily. It depends on Mg(2+) as a cofactor. Post-translationally, carboxylation is probably crucial for Mg(2+) binding and, consequently, for the gamma-phosphate positioning of ATP.

Its subcellular location is the cytoplasm. The enzyme catalyses UDP-N-acetyl-alpha-D-muramoyl-L-alanyl-D-glutamate + meso-2,6-diaminopimelate + ATP = UDP-N-acetyl-alpha-D-muramoyl-L-alanyl-gamma-D-glutamyl-meso-2,6-diaminopimelate + ADP + phosphate + H(+). It participates in cell wall biogenesis; peptidoglycan biosynthesis. In terms of biological role, catalyzes the addition of meso-diaminopimelic acid to the nucleotide precursor UDP-N-acetylmuramoyl-L-alanyl-D-glutamate (UMAG) in the biosynthesis of bacterial cell-wall peptidoglycan. The protein is UDP-N-acetylmuramoyl-L-alanyl-D-glutamate--2,6-diaminopimelate ligase of Salmonella paratyphi A (strain ATCC 9150 / SARB42).